Here is a 171-residue protein sequence, read N- to C-terminus: S-ribosylhomocysteine lyase (171 aa).

Fe cation contacts are provided by His-54, His-58, and Cys-128.

Belongs to the LuxS family. In terms of assembly, homodimer. The cofactor is Fe cation.

It catalyses the reaction S-(5-deoxy-D-ribos-5-yl)-L-homocysteine = (S)-4,5-dihydroxypentane-2,3-dione + L-homocysteine. Involved in the synthesis of autoinducer 2 (AI-2) which is secreted by bacteria and is used to communicate both the cell density and the metabolic potential of the environment. The regulation of gene expression in response to changes in cell density is called quorum sensing. Catalyzes the transformation of S-ribosylhomocysteine (RHC) to homocysteine (HC) and 4,5-dihydroxy-2,3-pentadione (DPD). The polypeptide is S-ribosylhomocysteine lyase (Escherichia coli O157:H7).